The sequence spans 184 residues: MGSNVTPPGDGTLQYSLIMQHLVGDKRRPVELIPGGLGGIPTPIKPEEQKMMERVMESCGFKAALACVGGFVLGGAFGVFTAGIDTNVGFDPKDPLRTPTAKEVLRDMGQRGMSYAKNFAIVGAMFSCTECLVESYRGKSDWKNSVMSGCITGGAIGFRAGLKAGVLGCGGFAAFSAVIDYYLR.

Disulfide bonds link cysteine 59–cysteine 131 and cysteine 150–cysteine 169. A run of 3 helical transmembrane segments spans residues 64–84 (ALAC…TAGI), 115–133 (YAKN…ECLV), and 160–180 (AGLK…AVID).

It belongs to the Tim17/Tim22/Tim23 family. In terms of assembly, core component of the TIM22 complex.

Its subcellular location is the mitochondrion inner membrane. Functionally, essential core component of the TIM22 complex, a complex that mediates the import and insertion of multi-pass transmembrane proteins into the mitochondrial inner membrane. In the TIM22 complex, it constitutes the voltage-activated and signal-gated channel. Forms a twin-pore translocase that uses the membrane potential as external driving force in 2 voltage-dependent steps. This chain is Mitochondrial import inner membrane translocase subunit Tim22 (timm22), found in Xenopus laevis (African clawed frog).